The sequence spans 311 residues: Ribosomal RNA small subunit methyltransferase H (311 aa).

Residues 32-34 (GGH), aspartate 52, phenylalanine 78, aspartate 99, and glutamine 106 contribute to the S-adenosyl-L-methionine site.

It belongs to the methyltransferase superfamily. RsmH family.

It is found in the cytoplasm. The enzyme catalyses cytidine(1402) in 16S rRNA + S-adenosyl-L-methionine = N(4)-methylcytidine(1402) in 16S rRNA + S-adenosyl-L-homocysteine + H(+). In terms of biological role, specifically methylates the N4 position of cytidine in position 1402 (C1402) of 16S rRNA. The polypeptide is Ribosomal RNA small subunit methyltransferase H (Halothermothrix orenii (strain H 168 / OCM 544 / DSM 9562)).